The chain runs to 297 residues: Putative phosphate permease MJ0630 (297 aa).

Transmembrane regions (helical) follow at residues 2 to 22 (ITIE…LFIL), 45 to 65 (LLIL…NVGS), 67 to 87 (VNSL…VMTL), 99 to 119 (TVII…YVFG), 121 to 141 (ILLS…ILYS), 154 to 174 (ITMI…NLGS), 180 to 200 (VLGT…FLCL), 225 to 245 (FIAQ…GMPV), and 274 to 294 (NIIF…FIIN).

Belongs to the inorganic phosphate transporter (PiT) (TC 2.A.20) family.

It localises to the cell membrane. In terms of biological role, potential transporter for phosphate. The sequence is that of Putative phosphate permease MJ0630 from Methanocaldococcus jannaschii (strain ATCC 43067 / DSM 2661 / JAL-1 / JCM 10045 / NBRC 100440) (Methanococcus jannaschii).